A 311-amino-acid polypeptide reads, in one-letter code: Splicing factor spf30 (311 aa).

The region spanning 76-139 (DFTPGNLVMA…KAMPEEKRQE (64 aa)) is the Tudor domain. Disordered stretches follow at residues 154 to 183 (RSTP…RASS) and 276 to 311 (STED…DEDS). Positions 168-183 (ASMSTSPSNYASRASS) are enriched in polar residues. A Phosphoserine modification is found at serine 173. Over residues 301-311 (HIYNYREDEDS) the composition is skewed to basic and acidic residues.

Belongs to the SMN family. In terms of assembly, associates with spliceosomes.

Its subcellular location is the nucleus. Functionally, involved in spliceosome assembly. The protein is Splicing factor spf30 (spf30) of Schizosaccharomyces pombe (strain 972 / ATCC 24843) (Fission yeast).